The chain runs to 391 residues: ATP phosphoribosyltransferase regulatory subunit (391 aa).

The protein belongs to the class-II aminoacyl-tRNA synthetase family. HisZ subfamily. In terms of assembly, heteromultimer composed of HisG and HisZ subunits.

It localises to the cytoplasm. The protein operates within amino-acid biosynthesis; L-histidine biosynthesis; L-histidine from 5-phospho-alpha-D-ribose 1-diphosphate: step 1/9. Functionally, required for the first step of histidine biosynthesis. May allow the feedback regulation of ATP phosphoribosyltransferase activity by histidine. The sequence is that of ATP phosphoribosyltransferase regulatory subunit from Bacillus licheniformis (strain ATCC 14580 / DSM 13 / JCM 2505 / CCUG 7422 / NBRC 12200 / NCIMB 9375 / NCTC 10341 / NRRL NRS-1264 / Gibson 46).